The sequence spans 556 residues: Formate--tetrahydrofolate ligase (556 aa).

Position 65–72 (65–72) interacts with ATP; the sequence is TPAGEGKS.

This sequence belongs to the formate--tetrahydrofolate ligase family.

It carries out the reaction (6S)-5,6,7,8-tetrahydrofolate + formate + ATP = (6R)-10-formyltetrahydrofolate + ADP + phosphate. Its pathway is one-carbon metabolism; tetrahydrofolate interconversion. This Clostridium perfringens (strain 13 / Type A) protein is Formate--tetrahydrofolate ligase.